Reading from the N-terminus, the 254-residue chain is Myeloblastin (254 aa).

A signal peptide spans 1 to 27 (MSGSYPSPKGIHPFLLLALVVGGAVQA). The propeptide occupies 28–29 (SK). One can recognise a Peptidase S1 domain in the interval 30–250 (IVGGHEARPH…YVDWIQNVLR (221 aa)). A disulfide bridge connects residues Cys58 and Cys74. Residues His73 and Asp120 each act as charge relay system in the active site. N-linked (GlcNAc...) asparagine glycans are attached at residues Asn127 and Asn176. 3 disulfides stabilise this stretch: Cys154–Cys211, Cys184–Cys190, and Cys201–Cys226. Ser205 acts as the Charge relay system in catalysis. A propeptide spanning residues 251–254 (GAEP) is cleaved from the precursor.

This sequence belongs to the peptidase S1 family. Elastase subfamily. As to quaternary structure, may form dimers. Interacts with CD177; the interaction tethers PRTN3 to the cell surface; the interaction is direct. Interacts with SERPINB1. Interacts with ADGRG3.

It localises to the lysosome. The protein localises to the secreted. Its subcellular location is the cell membrane. It is found in the membrane raft. It catalyses the reaction Hydrolysis of proteins, including elastin, by preferential cleavage: -Ala-|-Xaa- &gt; -Val-|-Xaa-.. Serine protease that degrades elastin, fibronectin, laminin, vitronectin, and collagen types I, III, and IV (in vitro). By cleaving and activating receptor F2RL1/PAR-2, enhances endothelial cell barrier function and thus vascular integrity during neutrophil transendothelial migration. May play a role in neutrophil transendothelial migration, probably when associated with CD177. Triggers inflammatory processes in neutrophils by interacting with ADGRG3 upstream of F2RL1/PAR2 activation. The polypeptide is Myeloblastin (Prtn3) (Mus musculus (Mouse)).